The chain runs to 88 residues: Small cysteine-rich outer membrane protein OmcA (88 aa).

The N-terminal stretch at Met-1–Ser-18 is a signal peptide. Cys-19 carries the N-palmitoyl cysteine lipid modification. Cys-19 is lipidated: S-diacylglycerol cysteine. Positions Thr-67–Gln-88 are disordered.

In terms of assembly, part of a disulfide cross-linked outer membrane complex (COMC) composed of the major outer membrane porin (MOMP), the small cysteine-rich protein (OmcA) and the large cysteine-rich periplasmic protein (OmcB).

It is found in the cell outer membrane. Functionally, in elementary bodies (EBs, the infectious stage, which is able to survive outside the host cell) provides the structural integrity of the outer envelope through disulfide cross-links with the large cysteine-rich periplasmic protein and the major outer membrane porin. It has been described in publications as the Sarkosyl-insoluble COMC (Chlamydia outer membrane complex), and serves as the functional equivalent of peptidoglycan. This chain is Small cysteine-rich outer membrane protein OmcA (omcA), found in Chlamydia trachomatis serovar L2 (strain ATCC VR-902B / DSM 19102 / 434/Bu).